The following is a 78-amino-acid chain: D-alanyl carrier protein (78 aa).

In terms of domain architecture, Carrier spans 1-78 (MEFRDQVLDL…KIVAVLEELR (78 aa)). Serine 36 bears the O-(pantetheine 4'-phosphoryl)serine mark.

It belongs to the DltC family. Post-translationally, 4'-phosphopantetheine is transferred from CoA to a specific serine of apo-DCP.

The protein resides in the cytoplasm. Its pathway is cell wall biogenesis; lipoteichoic acid biosynthesis. In terms of biological role, carrier protein involved in the D-alanylation of lipoteichoic acid (LTA). The loading of thioester-linked D-alanine onto DltC is catalyzed by D-alanine--D-alanyl carrier protein ligase DltA. The DltC-carried D-alanyl group is further transferred to cell membrane phosphatidylglycerol (PG) by forming an ester bond, probably catalyzed by DltD. D-alanylation of LTA plays an important role in modulating the properties of the cell wall in Gram-positive bacteria, influencing the net charge of the cell wall. This is D-alanyl carrier protein from Staphylococcus saprophyticus subsp. saprophyticus (strain ATCC 15305 / DSM 20229 / NCIMB 8711 / NCTC 7292 / S-41).